A 117-amino-acid polypeptide reads, in one-letter code: Large ribosomal subunit protein bL20 (117 aa).

This sequence belongs to the bacterial ribosomal protein bL20 family.

Its function is as follows. Binds directly to 23S ribosomal RNA and is necessary for the in vitro assembly process of the 50S ribosomal subunit. It is not involved in the protein synthesizing functions of that subunit. This chain is Large ribosomal subunit protein bL20, found in Rickettsia massiliae (strain Mtu5).